Reading from the N-terminus, the 400-residue chain is Arabinan endo-1,5-alpha-L-arabinosidase B (400 aa).

An N-terminal signal peptide occupies residues 1 to 16; that stretch reads MAVIFVLFFLVSMALS. Residue asparagine 24 is glycosylated (N-linked (GlcNAc...) asparagine). The Proton acceptor role is filled by aspartate 70. Residue asparagine 184 is glycosylated (N-linked (GlcNAc...) asparagine). The active-site Proton donor is the glutamate 277. A glycan (N-linked (GlcNAc...) asparagine) is linked at asparagine 372.

Belongs to the glycosyl hydrolase 43 family.

It localises to the secreted. The enzyme catalyses Endohydrolysis of (1-&gt;5)-alpha-arabinofuranosidic linkages in (1-&gt;5)-arabinans.. The protein operates within glycan metabolism; L-arabinan degradation. In terms of biological role, endo-1,5-alpha-L-arabinanase involved in degradation of pectin. Its preferred substrate is linear 1,5-alpha-L-arabinan. This Emericella nidulans (strain FGSC A4 / ATCC 38163 / CBS 112.46 / NRRL 194 / M139) (Aspergillus nidulans) protein is Arabinan endo-1,5-alpha-L-arabinosidase B (abnB).